The sequence spans 448 residues: Glutamyl-tRNA reductase (448 aa).

Residues 49-52 (TCNR), S109, 114-116 (ETQ), and Q120 each bind substrate. The Nucleophile role is filled by C50. 189 to 194 (GAGEMS) contacts NADP(+).

It belongs to the glutamyl-tRNA reductase family. In terms of assembly, homodimer.

It carries out the reaction (S)-4-amino-5-oxopentanoate + tRNA(Glu) + NADP(+) = L-glutamyl-tRNA(Glu) + NADPH + H(+). It participates in porphyrin-containing compound metabolism; protoporphyrin-IX biosynthesis; 5-aminolevulinate from L-glutamyl-tRNA(Glu): step 1/2. Functionally, catalyzes the NADPH-dependent reduction of glutamyl-tRNA(Glu) to glutamate 1-semialdehyde (GSA). The sequence is that of Glutamyl-tRNA reductase from Staphylococcus aureus (strain NCTC 8325 / PS 47).